Reading from the N-terminus, the 307-residue chain is Protoheme IX farnesyltransferase (307 aa).

A run of 9 helical transmembrane segments spans residues 33 to 53 (IGIV…AFYF), 62 to 82 (LHIV…SCSI), 111 to 131 (RVLW…LMTT), 132 to 152 (VTAA…YTLW), 159 to 179 (LNTV…WTAV), 185 to 205 (IVPL…FLAL), 229 to 249 (MTKR…FYLF), 251 to 271 (LGIP…LLGL), and 287 to 307 (FVYS…ATIW).

The protein belongs to the UbiA prenyltransferase family. Protoheme IX farnesyltransferase subfamily. As to quaternary structure, interacts with CtaA.

The protein localises to the cell membrane. It catalyses the reaction heme b + (2E,6E)-farnesyl diphosphate + H2O = Fe(II)-heme o + diphosphate. Its pathway is porphyrin-containing compound metabolism; heme O biosynthesis; heme O from protoheme: step 1/1. In terms of biological role, converts heme B (protoheme IX) to heme O by substitution of the vinyl group on carbon 2 of heme B porphyrin ring with a hydroxyethyl farnesyl side group. The polypeptide is Protoheme IX farnesyltransferase (Geobacillus thermodenitrificans (strain NG80-2)).